Here is an 813-residue protein sequence, read N- to C-terminus: Fibroblast growth factor receptor 2 (813 aa).

A signal peptide spans 1-14 (MLLLALLAFLLVSR). Residues 18–367 (RPSYSMVDDT…EDNPVPYYME (350 aa)) lie on the Extracellular side of the membrane. In terms of domain architecture, Ig-like C2-type 1 spans 21–117 (YSMVDDTTPE…NSHFFHVNVT (97 aa)). Cys-58 and Cys-103 are oxidised to a cystine. N-linked (GlcNAc...) asparagine glycans are attached at residues Asn-79 and Asn-115. The tract at residues 119–143 (ASSSGDDEDDNDGSEDFTNDNNNIR) is disordered. Over residues 123–136 (GDDEDDNDGSEDFT) the composition is skewed to acidic residues. 2 Ig-like C2-type domains span residues 145–237 (PYWT…YHLD) and 246–348 (PILQ…AWLT). The tract at residues 152–169 (KMEKKLHAVSAANTVKLR) is heparin-binding. A disulfide bridge links Cys-170 with Cys-221. N-linked (GlcNAc...) asparagine glycosylation is found at Asn-231, Asn-255, Asn-287, Asn-308, and Asn-321. Cys-268 and Cys-332 are oxidised to a cystine. Residues 368-388 (IGIYSTGIFIIFCMVVVCVVC) form a helical membrane-spanning segment. At 389–813 (RMRQGAKKKK…FQHVNGVVKT (425 aa)) the chain is on the cytoplasmic side. Tyr-456 is subject to Phosphotyrosine; by autocatalysis. The region spanning 471 to 760 (LTLGKPLGEG…LTLTTNEEYL (290 aa)) is the Protein kinase domain. ATP-binding positions include 477 to 485 (LGEGCFGQV), Lys-507, 555 to 557 (EYA), and Asn-561. Tyr-576 is modified (phosphotyrosine; by autocatalysis). The Proton acceptor role is filled by Asp-616. Residues Tyr-646, Tyr-647, and Tyr-759 each carry the phosphotyrosine; by autocatalysis modification. Residues 771-792 (PSFPDSSCSASSSSGDDSVFSP) are compositionally biased toward low complexity. The segment at 771 to 801 (PSFPDSSCSASSSSGDDSVFSPDPMPHDPCL) is disordered.

Belongs to the protein kinase superfamily. Tyr protein kinase family. Fibroblast growth factor receptor subfamily. As to quaternary structure, monomer. Homodimer after ligand binding. Post-translationally, autophosphorylated. Binding of FGF family members together with heparan sulfate proteoglycan or heparin promotes receptor dimerization and autophosphorylation on tyrosine residues. Autophosphorylation occurs in trans between the two FGFR molecules present in the dimer. N-glycosylated in the endoplasmic reticulum. The N-glycan chains undergo further maturation to an Endo H-resistant form in the Golgi apparatus. In terms of processing, ubiquitinated. FGFR2 is rapidly ubiquitinated after autophosphorylation, leading to internalization and degradation. Subject to degradation both in lysosomes and by the proteasome. In terms of tissue distribution, expressed in the anterior neural plate in early neurula stage embryos. Later in development, the protein is also expressed in the eye anlagen, midbrain-hindbrain boundary and otic vesicle.

It localises to the cell membrane. Its subcellular location is the golgi apparatus. The protein localises to the cytoplasmic vesicle. It catalyses the reaction L-tyrosyl-[protein] + ATP = O-phospho-L-tyrosyl-[protein] + ADP + H(+). Present in an inactive conformation in the absence of bound ligand. Ligand binding leads to dimerization and activation by autophosphorylation on tyrosine residues. Tyrosine-protein kinase that acts as a cell-surface receptor for fibroblast growth factors and plays an essential role in the regulation of cell proliferation, differentiation, migration and apoptosis, and in the regulation of embryonic development. Required for normal embryonic patterning, limb bud development, lung morphogenesis, osteogenesis and skin development. Plays an essential role in the regulation of osteoblast differentiation, proliferation and apoptosis, and is required for normal skeleton development. Promotes cell proliferation in keratinocytes and immature osteoblasts, but promotes apoptosis in differentiated osteoblasts. Phosphorylates PLCG1, FRS2 and PAK4. Ligand binding leads to the activation of several signaling cascades. Activation of PLCG1 leads to the production of the cellular signaling molecules diacylglycerol and inositol 1,4,5-trisphosphate. Phosphorylation of FRS2 triggers recruitment of GRB2, GAB1, PIK3R1 and SOS1, and mediates activation of RAS, MAPK1/ERK2, MAPK3/ERK1 and the MAP kinase signaling pathway, as well as of the AKT1 signaling pathway. FGFR2 signaling is down-regulated by ubiquitination, internalization and degradation. Mutations that lead to constitutive kinase activation or impair normal FGFR2 maturation, internalization and degradation lead to aberrant signaling. Over-expressed FGFR2 promotes activation of STAT1. This chain is Fibroblast growth factor receptor 2 (fgfr2), found in Xenopus laevis (African clawed frog).